The following is a 144-amino-acid chain: MAENWEPKIVGFCCNWCTYGGADTAGVGRMQYPPSIRIIRVMCSGRIEPSFILKAFKEGADGVFIGGCHPGDCHYDAGNYKWQRRVMMLYDMLDELGIEKERVMHEWISASEGEKFQIAMNDIYDKIKAMGPCTLKENTGKIDE.

This sequence belongs to the MvhD/VhuD family. In terms of assembly, the F420-non-reducing hydrogenase vhc is composed of three subunits; VhcA, VhcD and VhcG. It depends on [2Fe-2S] cluster as a cofactor.

This is F420-non-reducing hydrogenase vhc iron-sulfur subunit D (vhcD) from Methanococcus voltae.